Here is a 588-residue protein sequence, read N- to C-terminus: Probable G-protein coupled receptor 162 (588 aa).

Residues Met-1 to Ala-17 are Extracellular-facing. A helical transmembrane segment spans residues Leu-18 to Ile-38. Residues Ser-39–Glu-49 lie on the Cytoplasmic side of the membrane. A helical transmembrane segment spans residues Leu-50–Phe-70. Over Ala-71–Lys-91 the chain is Extracellular. Asn-86 carries an N-linked (GlcNAc...) asparagine glycan. The helical transmembrane segment at Val-92–Ser-112 threads the bilayer. At Tyr-113 to Gln-133 the chain is on the cytoplasmic side. The chain crosses the membrane as a helical span at residues Ala-134–Ile-154. Over Gly-155–Lys-174 the chain is Extracellular. A helical membrane pass occupies residues Ile-175 to Leu-195. At Val-196–Ala-275 the chain is on the cytoplasmic side. Residues Ile-276–Leu-296 traverse the membrane as a helical segment. The Extracellular segment spans residues Lys-297–Pro-303. Residues Trp-304–Ile-324 form a helical membrane-spanning segment. The Cytoplasmic portion of the chain corresponds to Trp-325–Leu-588. 2 positions are modified to phosphoserine: Ser-413 and Ser-435. 2 disordered regions span residues Gln-445–Gly-474 and Glu-511–Leu-550. Positions Pro-530–Arg-546 are enriched in low complexity.

This sequence belongs to the G-protein coupled receptor 1 family.

The protein resides in the cell membrane. Functionally, orphan receptor. The sequence is that of Probable G-protein coupled receptor 162 (GPR162) from Homo sapiens (Human).